The following is a 531-amino-acid chain: Putative lipase ATG15 (531 aa).

Residues 1–11 (MKPGIKISKRY) are Cytoplasmic-facing. Residues 12-31 (SARNASVITVLLLLIYLIYI) form a helical; Signal-anchor for type II membrane protein membrane-spanning segment. Over 32–531 (NKETIQTKYQ…WIGICTEYGI (500 aa)) the chain is Lumenal. N-linked (GlcNAc...) asparagine glycans are attached at residues Asn178 and Asn207. Ser340 (charge relay system) is an active-site residue. The interval 482–513 (VPKKHKSSSSTASSTSAETSTLTVGPSPPEKT) is disordered. A compositionally biased stretch (low complexity) spans 489 to 502 (SSSTASSTSAETST).

The protein belongs to the AB hydrolase superfamily. Lipase family. As to quaternary structure, binds to both phosphatidylinositol (PI) and phosphatidylinositol 3,5-bisphosphate (PIP2).

It localises to the endosome. The protein resides in the multivesicular body membrane. The protein localises to the prevacuolar compartment membrane. It catalyses the reaction a triacylglycerol + H2O = a diacylglycerol + a fatty acid + H(+). Lipase which is essential for lysis of subvacuolar cytoplasm to vacuole targeted bodies and intravacuolar autophagic bodies. Involved in the lysis of intravacuolar multivesicular body (MVB) vesicles. The intravacuolar membrane disintegration by ATG15 is critical to life span extension. The protein is Putative lipase ATG15 (ATG15) of Kluyveromyces lactis (strain ATCC 8585 / CBS 2359 / DSM 70799 / NBRC 1267 / NRRL Y-1140 / WM37) (Yeast).